The chain runs to 542 residues: Protein NODULATION SIGNALING PATHWAY 1 (542 aa).

The segment at 73–150 (TSTTSLEPCG…SNCNSGNSKE (78 aa)) is disordered. Residues 92 to 103 (LPKKRNATDESS) show a composition bias toward basic and acidic residues. Over residues 136–148 (AKANGSNCNSGNS) the composition is skewed to low complexity. In terms of domain architecture, GRAS spans 145 to 532 (SGNSKEGRWA…QPVSFCSLWK (388 aa)). Residues 152-214 (RWAEQLLNPC…HLSSSSSSPT (63 aa)) form a leucine repeat I (LRI) region. Positions 233–332 (LLKFYEVSPW…GYNYYPRLLG (100 aa)) are VHIID. Residues 269-273 (LHILD) carry the VHIID motif. The leucine repeat II (LRII) stretch occupies residues 333–357 (YAQSININLQINRIENHSLQTLNAQ). The segment at 367–452 (LIVCAQFRLH…RESDERRVME (86 aa)) is PFYRE. An SAW region spans residues 455–532 (AAKALTNQRE…QPVSFCSLWK (78 aa)).

The protein belongs to the GRAS family. As to expression, highly expressed in roots.

It localises to the nucleus. Its function is as follows. Transcriptional regulator essential for Nod-factor-induced gene expression. Acts downstream of calcium spiking and a calcium/calmodulin-dependent protein kinase required for activation of early nodulation gene expression. Acts as a common symbiosis gene that positively contributes to the early steps of the arbuscular mycorrhizal fungus and rhizobial infection processes in roots. Transcription factor involved in the positive regulation of the beta-carotene isomerase D27, which participates in a pathway leading to biosynthesis of strigolactones in roots. The sequence is that of Protein NODULATION SIGNALING PATHWAY 1 from Lotus japonicus (Lotus corniculatus var. japonicus).